An 810-amino-acid polypeptide reads, in one-letter code: Hemoglobin-haptoglobin utilization protein B (810 aa).

Residues 1-22 (MPIPFKPVLAAAAIAQAFPAFA) form the signal peptide. In terms of domain architecture, TBDR plug spans 34–166 (NEITVTGTHK…LGGAVNYQTK (133 aa)). One can recognise a TBDR beta-barrel domain in the interval 175 to 810 (DKPYHLGIKG…SYNFTIEAKF (636 aa)). The short motif at 793 to 810 (QRFTSPGRSYNFTIEAKF) is the TonB C-terminal box element.

Belongs to the TonB-dependent receptor family.

It localises to the cell outer membrane. Functionally, acts as a receptor for hemoglobin or the hemoglobin/haptoglobin complex and is required for heme uptake. The polypeptide is Hemoglobin-haptoglobin utilization protein B (hpuB) (Neisseria meningitidis serogroup A / serotype 4A (strain DSM 15465 / Z2491)).